A 119-amino-acid chain; its full sequence is E3 ubiquitin-protein ligase PPP1R11 (119 aa).

The interval 1 to 42 is disordered; that stretch reads MAESSGPTAGGGATSSTVTTESDTQPEHRSLTLKLRKRKPDK. Atypical RING finger domain stretches follow at residues 55 to 65 and 87 to 96; these read NLGRRSSKCCC and CESAHCIRGH. A disordered region spans residues 96–119; the sequence is HKKATSGSKETPSSHHDKTGSMQH. The span at 107 to 119 shows a compositional bias: basic and acidic residues; sequence PSSHHDKTGSMQH.

The enzyme catalyses S-ubiquitinyl-[E2 ubiquitin-conjugating enzyme]-L-cysteine + [acceptor protein]-L-lysine = [E2 ubiquitin-conjugating enzyme]-L-cysteine + N(6)-ubiquitinyl-[acceptor protein]-L-lysine.. It participates in protein modification; protein ubiquitination. Its function is as follows. Atypical E3 ubiquitin-protein ligase which ubiquitinates TLR2 at 'Lys-754' leading to its degradation by the proteasome. Inhibitor of protein phosphatase 1. In Xenopus tropicalis (Western clawed frog), this protein is E3 ubiquitin-protein ligase PPP1R11 (ppp1r11).